We begin with the raw amino-acid sequence, 169 residues long: NADH-quinone oxidoreductase subunit B (169 aa).

Residues Cys-42, Cys-43, Cys-107, and Cys-136 each contribute to the [4Fe-4S] cluster site.

The protein belongs to the complex I 20 kDa subunit family. In terms of assembly, NDH-1 is composed of 14 different subunits. Subunits NuoB, C, D, E, F, and G constitute the peripheral sector of the complex. [4Fe-4S] cluster is required as a cofactor.

Its subcellular location is the cell inner membrane. It catalyses the reaction a quinone + NADH + 5 H(+)(in) = a quinol + NAD(+) + 4 H(+)(out). NDH-1 shuttles electrons from NADH, via FMN and iron-sulfur (Fe-S) centers, to quinones in the respiratory chain. Couples the redox reaction to proton translocation (for every two electrons transferred, four hydrogen ions are translocated across the cytoplasmic membrane), and thus conserves the redox energy in a proton gradient. The polypeptide is NADH-quinone oxidoreductase subunit B (Campylobacter hominis (strain ATCC BAA-381 / DSM 21671 / CCUG 45161 / LMG 19568 / NCTC 13146 / CH001A)).